The primary structure comprises 547 residues: KsdD-like steroid dehydrogenase MSMEG_5835 (547 aa).

Residue 5 to 36 participates in FAD binding; the sequence is DVIVVGAGLAGLVAACELVERGHSVIIVDQEN.

The protein belongs to the FAD-dependent oxidoreductase 2 family. FAD serves as cofactor.

Its pathway is lipid metabolism; steroid biosynthesis. Functionally, able to catalyze the elimination of the C-1 and C-2 hydrogen atoms of the A-ring from the polycyclic ring structure of 3-ketosteroids, but the ketosteroid dehydrogenase activity is low compared to KsdD in the cholesterol degradation process. The low activity could be due to different substrate specificity. The chain is KsdD-like steroid dehydrogenase MSMEG_5835 from Mycolicibacterium smegmatis (strain ATCC 700084 / mc(2)155) (Mycobacterium smegmatis).